A 121-amino-acid polypeptide reads, in one-letter code: Large ribosomal subunit protein bL12 (121 aa).

Belongs to the bacterial ribosomal protein bL12 family. As to quaternary structure, homodimer. Part of the ribosomal stalk of the 50S ribosomal subunit. Forms a multimeric L10(L12)X complex, where L10 forms an elongated spine to which 2 to 4 L12 dimers bind in a sequential fashion. Binds GTP-bound translation factors.

Functionally, forms part of the ribosomal stalk which helps the ribosome interact with GTP-bound translation factors. Is thus essential for accurate translation. The protein is Large ribosomal subunit protein bL12 of Pediococcus pentosaceus (strain ATCC 25745 / CCUG 21536 / LMG 10740 / 183-1w).